The sequence spans 1302 residues: MTPLKTSVKAFFTLHVLFSCISHGLVEGSRLPDPQLLPDGDTHLQHVGGTLTLICRGSTALHWRLASRNVSSVRIESCEERLHKHCSKLVIHNLRHNDTGIYSCSHKKSSDHEVSTYVFVKDPHHPFVEAYSLPHPLFAYRNDPYFVVPCRTTYPNQNVILETQMNPMADDVKRGVQWDPKKGFTVPLKPYDSYHLITCLTRVDNAEFSSVYLLKRLTMEIKNLAIEPERPRVLVGDTLILNCSAETTYNGRIHFEWEFHKERINRTHHFSTTPVQLAQIMVMSKALIVPNVTMEDKGTYTCTGSIEFKKLQMSTKVIVYEHPFLNVTHNKRKFTSTVEGRRVQFEPRVNAVPAPDRVLWYKDGVAISENSTCYETAGYNLTIKQVRQKDAGIFTIALSNQERGLYRNISYKLEVRVKPKIFEEDVAPAGPQTFRYDQRHKLTCTAFGIPMPNITWFWQPCDPSANLTECKLYTDPLPIENVDDHFPQNPIKDVNSKVGLLKSKNRTISTLVVKTANVSGVYSCTARNELGNRTMRIPFYVDDHPQPFEIEPSTAVAGDDITLTCRGTRYLYDRLTWYDPLGHKVPKDETTLRIEPYTISLSIKLPNVSRNHTLGYECQALKINTNKVVNVTSALTIDERQGPWLMQNLTNQDVNSSSTLTLACLAYGVPAPFITWYKDKTPVTEGPGITLKDDGTLIIERVKKDDEGIYECRASNDGGEAKTSAVITVVGEDGKPNIEVIILVSTGAAATFLWIMLILFIRKLRKPSSADLKTGYLSIIMDPEQMPLDEQCDRLPYDSNKWEFPQDRLRLGKTLGHGAFGKVVEASAFGIDKISTCKTVAVKMLKVGATNNEWRALMSELKILIHIGHHLNVVNLLGACTKRGGPLMIIVEFCKYGNLSNYLRSKRGDFVVYKSQDGKAVRSSSGCDLSELIKRRLESVASTGSSASSGFIEDKSYCDSEEEEEEQEDLYKKVLTLEDLICYSFQVAKGMEFLASRKCIHRDLAARNILLSENNVVKICDFGLARDVYKDPDYVRKGDARLPLKWMAPEAIFDKIYTTQSDVWSFGVLMWEIFSLGASPYPGLHIDEEFCCRLKEGTRMKAPEYSSSEIYQTMLDCWHGEPSQRPTFTELVERLGDLLQASVQQEGKHYIPINTALLTKADPSNQSPTEETSTRPVSLRDSGTAWNIKIRPESVKTFDEVILENGTNKIHEGGQSDSGIGLSSDDLKTLKRLESLARPRSFMSRAMKRKSKESVLLEGEMDKYPPLVPSLSLEDSSLDSEMECHSPPPDYNYVVRYSTPPV.

The N-terminal stretch at 1–28 (MTPLKTSVKAFFTLHVLFSCISHGLVEG) is a signal peptide. Residues 29–740 (SRLPDPQLLP…GEDGKPNIEV (712 aa)) are Extracellular-facing. Ig-like C2-type domains follow at residues 34 to 115 (PQLL…HEVS), 143 to 206 (DPYF…VDNA), 222 to 318 (KNLA…TKVI), 326 to 412 (NVTH…ISYK), 419 to 542 (PKIF…FYVD), 545 to 636 (PQPF…SALT), and 643 to 728 (PWLM…AVIT). 2 disulfides stabilise this stretch: cysteine 55–cysteine 104 and cysteine 150–cysteine 199. Residues asparagine 69 and asparagine 97 are each glycosylated (N-linked (GlcNAc...) asparagine). 17 N-linked (GlcNAc...) asparagine glycosylation sites follow: asparagine 242, asparagine 265, asparagine 291, asparagine 326, asparagine 370, asparagine 380, asparagine 408, asparagine 453, asparagine 466, asparagine 505, asparagine 517, asparagine 532, asparagine 607, asparagine 611, asparagine 630, asparagine 648, and asparagine 655. A disulfide bond links cysteine 243 and cysteine 302. A disulfide bridge connects residues cysteine 444 and cysteine 524. An intrachain disulfide couples cysteine 565 to cysteine 618. A disulfide bond links cysteine 664 and cysteine 712. Residues 741–761 (IILVSTGAAATFLWIMLILFI) form a helical membrane-spanning segment. The Cytoplasmic portion of the chain corresponds to 762–1302 (RKLRKPSSAD…YVVRYSTPPV (541 aa)). The region spanning 809 to 1139 (LRLGKTLGHG…ELVERLGDLL (331 aa)) is the Protein kinase domain. ATP is bound by residues 815–823 (LGHGAFGKV) and lysine 843. Residue aspartate 1003 is the Proton acceptor of the active site. 3 positions are modified to phosphotyrosine; by autocatalysis: tyrosine 1029, tyrosine 1034, and tyrosine 1150. 2 disordered regions span residues 1159-1179 (TKAD…PVSL) and 1266-1292 (PLVP…PDYN). Positions 1162–1176 (DPSNQSPTEETSTRP) are enriched in polar residues.

It belongs to the protein kinase superfamily. Tyr protein kinase family. CSF-1/PDGF receptor subfamily. Interacts with isoform VEGF165 of vegfaa and isoform VEGF171 of vegfab. Phosphorylated and activated by vegfaa and vegfab. In terms of tissue distribution, first expressed in embryos between 5- and 7-somites. At 7 somites, expressed in discrete bilateral stripes both anteriorly and posteriorly, and in a transverse ectodermal stripe in the hindbrain. From 7-somites, expression seems to extend caudally from the head, and in both directions in the trunk region, until by 20-somites, expression is detected as a continuous band from the anterior head region to the tailbud. Concurrently, cells expressing kdrl in the mid- and posterior trunk regions converge medially. By 24 hours post-fertilization (hpf), expressed in all the endothelial cells lining the vasculature.

The protein resides in the cell membrane. The catalysed reaction is L-tyrosyl-[protein] + ATP = O-phospho-L-tyrosyl-[protein] + ADP + H(+). Its function is as follows. Receptor for VEGF or VEGFC. Has a tyrosine-protein kinase activity. Combinations of multiple VEGF receptors are required for development of different blood vessel types in the embryo. Involved in angiogenesis, specifically in VEGF-induced sprouting of new blood vessels. Particularly involved in artery formation. Does not appear to be required for hematopoiesis. This is Vascular endothelial growth factor receptor kdr-like (kdrl) from Danio rerio (Zebrafish).